The chain runs to 1379 residues: DNA-directed RNA polymerase subunit beta (1379 aa).

Belongs to the RNA polymerase beta chain family. As to quaternary structure, the RNAP catalytic core consists of 2 alpha, 1 beta, 1 beta' and 1 omega subunit. When a sigma factor is associated with the core the holoenzyme is formed, which can initiate transcription.

The enzyme catalyses RNA(n) + a ribonucleoside 5'-triphosphate = RNA(n+1) + diphosphate. Functionally, DNA-dependent RNA polymerase catalyzes the transcription of DNA into RNA using the four ribonucleoside triphosphates as substrates. This chain is DNA-directed RNA polymerase subunit beta, found in Rhizobium etli (strain ATCC 51251 / DSM 11541 / JCM 21823 / NBRC 15573 / CFN 42).